The chain runs to 435 residues: Actin-like protein 7A (435 aa).

Positions 1–64 (MWAPPAAIMG…TESKAAKERP (64 aa)) are disordered. Low complexity predominate over residues 20–31 (QAPLQTQALQTA). The segment at 31-51 (ASLRDGPAKRAVWVRHTSSEP) is required for interaction with TES. The segment covering 55–64 (TESKAAKERP) has biased composition (basic and acidic residues).

Belongs to the actin family. Interacts (via N-terminus) with TES (via LIM domain 2). Heterodimer with TES; the heterodimer interacts with ENAH to form a heterotrimer. Interacts with ACTL9. Interacts with CYLC1; the interaction may be relevant for proper acrosome attachment to the nuclear envelope. In terms of tissue distribution, strongly expressed in testis. Also expressed in other tissues.

The protein resides in the cytoplasm. The protein localises to the cytoskeleton. Its subcellular location is the golgi apparatus. It localises to the nucleus. It is found in the cytoplasmic vesicle. The protein resides in the secretory vesicle. The protein localises to the acrosome. Essential for normal spermatogenesis and male fertility. Required for normal sperm head morphology, acroplaxome formation, acrosome attachment, and acrosome granule stability. May anchor and stabilize acrosomal adherence to the acroplaxome at least in part by facilitating the presence of F-actin in the subacrosomal space. May play an important role in formation and fusion of Golgi-derived vesicles during acrosome biogenesis. The polypeptide is Actin-like protein 7A (ACTL7A) (Homo sapiens (Human)).